The primary structure comprises 298 residues: Urease accessory protein UreD (298 aa).

Belongs to the UreD family. In terms of assembly, ureD, UreF and UreG form a complex that acts as a GTP-hydrolysis-dependent molecular chaperone, activating the urease apoprotein by helping to assemble the nickel containing metallocenter of UreC. The UreE protein probably delivers the nickel.

The protein localises to the cytoplasm. In terms of biological role, required for maturation of urease via the functional incorporation of the urease nickel metallocenter. In Frankia alni (strain DSM 45986 / CECT 9034 / ACN14a), this protein is Urease accessory protein UreD.